Reading from the N-terminus, the 558-residue chain is Potassium-transporting ATPase potassium-binding subunit (558 aa).

Helical transmembrane passes span 2 to 22, 66 to 86, 135 to 155, 177 to 197, 253 to 273, 280 to 300, 327 to 347, 354 to 374, 378 to 398, 413 to 433, 482 to 502, and 528 to 548; these read LQGFVQIALILAILVATAPLL, VSAALISNLVMGVFVFLILMF, ALGFLMFTSAATGIAVAIAFI, ILLPISLVGAILLLVAGVPET, LLETVIMMVIPAGLIITYGIM, GWLIFWMVFILYGILIAIAAV, FGWVLTALWAVSTTGTMCGAV, LMPPGGFVTLSDLFLQIIWGG, GTAYLFVFLILTVFLTGLMVG, IVLASLILLIHPIAILIPTAI, LSASFSLIAGRYVPIVALIFL, and GITAGAIIILGALTFLPILVL.

The protein belongs to the KdpA family. In terms of assembly, the system is composed of three essential subunits: KdpA, KdpB and KdpC.

It is found in the cell inner membrane. In terms of biological role, part of the high-affinity ATP-driven potassium transport (or Kdp) system, which catalyzes the hydrolysis of ATP coupled with the electrogenic transport of potassium into the cytoplasm. This subunit binds the periplasmic potassium ions and delivers the ions to the membrane domain of KdpB through an intramembrane tunnel. The chain is Potassium-transporting ATPase potassium-binding subunit from Synechocystis sp. (strain ATCC 27184 / PCC 6803 / Kazusa).